We begin with the raw amino-acid sequence, 146 residues long: Hemoglobin subunit beta (146 aa).

The Globin domain occupies 2–146 (HWTAEEKSAI…VAHALAHQYH (145 aa)). The heme b site is built by histidine 63 and histidine 92.

It belongs to the globin family. Heterotetramer of two alpha chains and two beta chains. Oxygenation results in dissociation to dimers. As to expression, red blood cells.

Its function is as follows. Involved in oxygen transport from the lung to the various peripheral tissues. In Erythrolamprus miliaris (South American water snake), this protein is Hemoglobin subunit beta (HBB).